The primary structure comprises 821 residues: LPS-assembly protein LptD (821 aa).

The first 20 residues, 1 to 20 (MGKRLFWTALSGLMVSAAHA), serve as a signal peptide directing secretion.

Belongs to the LptD family. Component of the lipopolysaccharide transport and assembly complex. Interacts with LptE and LptA.

It is found in the cell outer membrane. Its function is as follows. Together with LptE, is involved in the assembly of lipopolysaccharide (LPS) at the surface of the outer membrane. The polypeptide is LPS-assembly protein LptD (Chromohalobacter salexigens (strain ATCC BAA-138 / DSM 3043 / CIP 106854 / NCIMB 13768 / 1H11)).